Consider the following 393-residue polypeptide: NADH-quinone oxidoreductase subunit H 2 (393 aa).

10 consecutive transmembrane segments (helical) span residues 13–33, 79–99, 112–132, 158–178, 186–206, 240–260, 278–298, 309–329, 333–353, and 368–388; these read VLVT…IVLV, AIFW…FAVI, VGLL…ILGG, LAFA…QGIV, VWGI…YIIA, LYFL…VTLF, LNYG…FTLI, VLLG…IPMV, MIGL…MIWF, and IGWK…AVLG.

It belongs to the complex I subunit 1 family. NDH-1 is composed of 14 different subunits. Subunits NuoA, H, J, K, L, M, N constitute the membrane sector of the complex.

It localises to the cell inner membrane. The catalysed reaction is a quinone + NADH + 5 H(+)(in) = a quinol + NAD(+) + 4 H(+)(out). NDH-1 shuttles electrons from NADH, via FMN and iron-sulfur (Fe-S) centers, to quinones in the respiratory chain. The immediate electron acceptor for the enzyme in this species is believed to be ubiquinone. Couples the redox reaction to proton translocation (for every two electrons transferred, four hydrogen ions are translocated across the cytoplasmic membrane), and thus conserves the redox energy in a proton gradient. This subunit may bind ubiquinone. The sequence is that of NADH-quinone oxidoreductase subunit H 2 from Solibacter usitatus (strain Ellin6076).